Reading from the N-terminus, the 322-residue chain is Pilin gene-inverting protein (322 aa).

In terms of biological role, may be the site-specific invertase required for pilin gene inversion. Moraxella can express either a Q or I pilin; the inversion of 2 kb of DNA determines which pilin is expressed. The chain is Pilin gene-inverting protein (piv) from Moraxella lacunata.